Consider the following 224-residue polypeptide: MRLTDVNSIKEALLEGKVVRIYHSGERNPKISEILEIARKKGVPIYRKDGERFSAEVSPIKYADFEFIVKKALTGGSFILFLDNVVDQRNIGACIRTAEFFGAAGVVLPKRRVGSIQEGAVKASAGAVFHIPIARVENFASAIKKLKKLGFTTLAADLDGEDLEAVSLLLPAAVVIGGEDRGVSRPVKKQCDFVVKIPGVGKVNSLNLSVAAGIFLYTLSRQKY.

Positions 177, 197, and 206 each coordinate S-adenosyl-L-methionine.

Belongs to the class IV-like SAM-binding methyltransferase superfamily. RNA methyltransferase TrmH family.

This is an uncharacterized protein from Archaeoglobus fulgidus (strain ATCC 49558 / DSM 4304 / JCM 9628 / NBRC 100126 / VC-16).